The primary structure comprises 500 residues: Probable cytochrome P450 514A2 (500 aa).

Residues 4-24 traverse the membrane as a helical segment; the sequence is IYTIILTIIILVLIISIKDLF. A heme-binding site is contributed by Cys446.

It belongs to the cytochrome P450 family. Requires heme as cofactor.

It is found in the membrane. This Dictyostelium discoideum (Social amoeba) protein is Probable cytochrome P450 514A2 (cyp514A2).